The primary structure comprises 110 residues: Phosphoribosyl-ATP pyrophosphatase (110 aa).

The protein belongs to the PRA-PH family.

It is found in the cytoplasm. The catalysed reaction is 1-(5-phospho-beta-D-ribosyl)-ATP + H2O = 1-(5-phospho-beta-D-ribosyl)-5'-AMP + diphosphate + H(+). It functions in the pathway amino-acid biosynthesis; L-histidine biosynthesis; L-histidine from 5-phospho-alpha-D-ribose 1-diphosphate: step 2/9. The sequence is that of Phosphoribosyl-ATP pyrophosphatase from Clostridium novyi (strain NT).